A 212-amino-acid polypeptide reads, in one-letter code: Ribosomal RNA small subunit methyltransferase G (212 aa).

Residues Gly-80, Leu-85, 131–132, and Arg-146 contribute to the S-adenosyl-L-methionine site; that span reads AE.

It belongs to the methyltransferase superfamily. RNA methyltransferase RsmG family.

The protein resides in the cytoplasm. The enzyme catalyses guanosine(527) in 16S rRNA + S-adenosyl-L-methionine = N(7)-methylguanosine(527) in 16S rRNA + S-adenosyl-L-homocysteine. Functionally, specifically methylates the N7 position of guanine in position 527 of 16S rRNA. This is Ribosomal RNA small subunit methyltransferase G from Stenotrophomonas maltophilia (strain R551-3).